The following is a 427-amino-acid chain: 3-phosphoshikimate 1-carboxyvinyltransferase (427 aa).

Positions 22, 23, and 27 each coordinate 3-phosphoshikimate. K22 contributes to the phosphoenolpyruvate binding site. Phosphoenolpyruvate is bound by residues G93 and R122. The 3-phosphoshikimate site is built by S167, Q169, D315, and K342. Q169 lines the phosphoenolpyruvate pocket. D315 (proton acceptor) is an active-site residue. Residues R346 and R387 each contribute to the phosphoenolpyruvate site.

Belongs to the EPSP synthase family. As to quaternary structure, monomer.

It localises to the cytoplasm. The enzyme catalyses 3-phosphoshikimate + phosphoenolpyruvate = 5-O-(1-carboxyvinyl)-3-phosphoshikimate + phosphate. It functions in the pathway metabolic intermediate biosynthesis; chorismate biosynthesis; chorismate from D-erythrose 4-phosphate and phosphoenolpyruvate: step 6/7. Functionally, catalyzes the transfer of the enolpyruvyl moiety of phosphoenolpyruvate (PEP) to the 5-hydroxyl of shikimate-3-phosphate (S3P) to produce enolpyruvyl shikimate-3-phosphate and inorganic phosphate. The polypeptide is 3-phosphoshikimate 1-carboxyvinyltransferase (Thermus thermophilus (strain ATCC 27634 / DSM 579 / HB8)).